The following is a 215-amino-acid chain: Adenylate kinase (215 aa).

10 to 15 (GAGKGT) is a binding site for ATP. The tract at residues 30-59 (STGDMFRAAMKNETEMGKLAKSFIDKGELV) is NMP. AMP-binding positions include T31, R36, 57–59 (ELV), 86–89 (GYPR), and Q93. The LID stretch occupies residues 127–165 (GRYICRNCGATYHKIFNPTKVEGTCDVCGSHDLYQRADD). R128 provides a ligand contact to ATP. Zn(2+) is bound by residues C131 and C134. ATP is bound at residue 137-138 (TY). Zn(2+) contacts are provided by C151 and C154. Positions 162 and 173 each coordinate AMP. Q201 serves as a coordination point for ATP.

The protein belongs to the adenylate kinase family. As to quaternary structure, monomer.

It is found in the cytoplasm. The enzyme catalyses AMP + ATP = 2 ADP. The protein operates within purine metabolism; AMP biosynthesis via salvage pathway; AMP from ADP: step 1/1. Functionally, catalyzes the reversible transfer of the terminal phosphate group between ATP and AMP. Plays an important role in cellular energy homeostasis and in adenine nucleotide metabolism. The protein is Adenylate kinase of Lactococcus lactis subsp. cremoris (strain SK11).